Reading from the N-terminus, the 370-residue chain is Protein Wnt-1 (370 aa).

An N-terminal signal peptide occupies residues 1–19 (MRVLALLLAVKAACVLLVS). An N-linked (GlcNAc...) asparagine glycan is attached at N28. Disulfide bonds link C92/C103, C142/C150, C152/C169, C217/C231, and C219/C226. A lipid anchor (O-palmitoleoyl serine; by PORCN) is attached at S223. A disordered region spans residues 261–282 (GSNRASHRADPRHLEPENPAHK). The segment covering 267–280 (HRADPRHLEPENPA) has biased composition (basic and acidic residues). 6 cysteine pairs are disulfide-bonded: C299–C330, C315–C325, C329–C369, C345–C360, C347–C357, and C352–C353. The N-linked (GlcNAc...) asparagine glycan is linked to N316. The N-linked (GlcNAc...) asparagine glycan is linked to N359.

Belongs to the Wnt family. Post-translationally, palmitoleoylation is required for efficient binding to frizzled receptors. Palmitoleoylation is necessary for proper trafficking to cell surface. Depalmitoleoylated by NOTUM, leading to inhibit Wnt signaling pathway.

The protein resides in the secreted. The protein localises to the extracellular space. It is found in the extracellular matrix. Functionally, ligand for members of the frizzled family of seven transmembrane receptors. Acts in the canonical Wnt signaling pathway by promoting beta-catenin-dependent transcriptional activation. Involved in neurogenesis. Performs a partially redundant function with wnt10b in the formation of the midbrain-hindbrain boundary (MHB) organizer. In the hindbrain, mediates lateral inhibition of boundary cell specification, probably via up-regulation of proneural and Delta gene expression in non-boundary cells; localized expression of wnt1 in boundary cells is maintained via rfng-mediated modulation of Notch activity. The protein is Protein Wnt-1 (wnt1) of Danio rerio (Zebrafish).